Reading from the N-terminus, the 743-residue chain is Threonine synthase-like 1 (743 aa).

K281 is subject to N6-acetyllysine. K351 carries the N6-(pyridoxal phosphate)lysine modification.

This sequence belongs to the threonine synthase family. Requires pyridoxal 5'-phosphate as cofactor.

In Pongo abelii (Sumatran orangutan), this protein is Threonine synthase-like 1 (THNSL1).